The chain runs to 172 residues: MAKMQAKVQADERDDGLREKMISVNRVTKVVKGGRILGFAALTVVGDGDGRVGMGKGKAKEVPVAVQKAMEQARRNMFKVPLKNGTLQHEVHGKHGASTVLLAPAKDGTGVIAGGPMRAVFDVMGVQNVVAKSHGSTNPYNLVRATLDGLRKQSTPADIAAKRGKSVEEILG.

An S5 DRBM domain is found at 17-80 (LREKMISVNR…EQARRNMFKV (64 aa)).

Belongs to the universal ribosomal protein uS5 family. In terms of assembly, part of the 30S ribosomal subunit. Contacts proteins S4 and S8.

Its function is as follows. With S4 and S12 plays an important role in translational accuracy. Functionally, located at the back of the 30S subunit body where it stabilizes the conformation of the head with respect to the body. The chain is Small ribosomal subunit protein uS5 from Burkholderia pseudomallei (strain 1106a).